The sequence spans 229 residues: Cytochrome c oxidase subunit 2 (229 aa).

Topologically, residues Met-1–Ser-14 are mitochondrial intermembrane. The helical transmembrane segment at Pro-15–Thr-45 threads the bilayer. Residues Ser-46 to Gln-59 lie on the Mitochondrial matrix side of the membrane. The helical transmembrane segment at Glu-60 to Met-87 threads the bilayer. Residues Asp-88 to Leu-229 lie on the Mitochondrial intermembrane side of the membrane. Cu cation contacts are provided by His-162, Cys-197, Glu-199, Cys-201, His-205, and Met-208. Position 199 (Glu-199) interacts with Mg(2+).

It belongs to the cytochrome c oxidase subunit 2 family. Component of the cytochrome c oxidase (complex IV, CIV), a multisubunit enzyme composed of 14 subunits. The complex is composed of a catalytic core of 3 subunits MT-CO1, MT-CO2 and MT-CO3, encoded in the mitochondrial DNA, and 11 supernumerary subunits COX4I, COX5A, COX5B, COX6A, COX6B, COX6C, COX7A, COX7B, COX7C, COX8 and NDUFA4, which are encoded in the nuclear genome. The complex exists as a monomer or a dimer and forms supercomplexes (SCs) in the inner mitochondrial membrane with NADH-ubiquinone oxidoreductase (complex I, CI) and ubiquinol-cytochrome c oxidoreductase (cytochrome b-c1 complex, complex III, CIII), resulting in different assemblies (supercomplex SCI(1)III(2)IV(1) and megacomplex MCI(2)III(2)IV(2)). Found in a complex with TMEM177, COA6, COX18, COX20, SCO1 and SCO2. Interacts with TMEM177 in a COX20-dependent manner. Interacts with COX20. Interacts with COX16. The cofactor is Cu cation.

It is found in the mitochondrion inner membrane. The catalysed reaction is 4 Fe(II)-[cytochrome c] + O2 + 8 H(+)(in) = 4 Fe(III)-[cytochrome c] + 2 H2O + 4 H(+)(out). Functionally, component of the cytochrome c oxidase, the last enzyme in the mitochondrial electron transport chain which drives oxidative phosphorylation. The respiratory chain contains 3 multisubunit complexes succinate dehydrogenase (complex II, CII), ubiquinol-cytochrome c oxidoreductase (cytochrome b-c1 complex, complex III, CIII) and cytochrome c oxidase (complex IV, CIV), that cooperate to transfer electrons derived from NADH and succinate to molecular oxygen, creating an electrochemical gradient over the inner membrane that drives transmembrane transport and the ATP synthase. Cytochrome c oxidase is the component of the respiratory chain that catalyzes the reduction of oxygen to water. Electrons originating from reduced cytochrome c in the intermembrane space (IMS) are transferred via the dinuclear copper A center (CU(A)) of subunit 2 and heme A of subunit 1 to the active site in subunit 1, a binuclear center (BNC) formed by heme A3 and copper B (CU(B)). The BNC reduces molecular oxygen to 2 water molecules using 4 electrons from cytochrome c in the IMS and 4 protons from the mitochondrial matrix. The polypeptide is Cytochrome c oxidase subunit 2 (MT-CO2) (Myxine glutinosa (Atlantic hagfish)).